We begin with the raw amino-acid sequence, 483 residues long: GTPase Der (483 aa).

EngA-type G domains lie at 3–167 (FTLA…GEER) and 212–387 (LRIA…EIWN). Residues 9 to 16 (GRPNVGKS), 56 to 60 (DTAGL), 119 to 122 (NKAE), 218 to 225 (GRPNAGKS), 265 to 269 (DTAGM), and 330 to 333 (NKWD) contribute to the GTP site. The region spanning 388-472 (RRISTGRLNR…PIRLSLRTSD (85 aa)) is the KH-like domain.

This sequence belongs to the TRAFAC class TrmE-Era-EngA-EngB-Septin-like GTPase superfamily. EngA (Der) GTPase family. As to quaternary structure, associates with the 50S ribosomal subunit.

Its function is as follows. GTPase that plays an essential role in the late steps of ribosome biogenesis. The chain is GTPase Der from Brucella abortus (strain 2308).